Here is a 474-residue protein sequence, read N- to C-terminus: Alginate biosynthesis protein AlgX (474 aa).

A signal peptide spans 1–26 (MKTRTSRLFRLSALAAGLCLAQAALA). An SGNH hydrolase-like domain region spans residues 27–347 (ADPGAAPSYQ…QAMPLVDNGC (321 aa)). Cysteine 44 and cysteine 229 are oxidised to a cystine. The active site involves aspartate 174. Histidine 176 (proton acceptor) is an active-site residue. The Nucleophile role is filled by serine 269. Cysteine 347 and cysteine 460 form a disulfide bridge. Positions 348 to 474 (SGRKTVLSRK…AKASQSVAGR (127 aa)) are CBM domain.

It belongs to the AlgX family. In terms of assembly, monomer. Interacts with AlgK and MucD.

The protein localises to the periplasm. It participates in glycan biosynthesis; alginate biosynthesis. In terms of biological role, plays two roles in the biosynthesis of the exopolysaccharide alginate: protects alginate from degradation as the polymer traverses the periplasm, and also plays a role in its O-acetylation. Acetylation of alginate causes the cells in the biofilm to adhere better to lung epithelium, form microcolonies, and resist the effects of the host immune system and/or antibiotics. Displays a low acetylesterase activity in vitro using a pseudosubstrate, 3-carboxyumbelliferyl acetate. Probably has acetyltransferase activity in vivo. This Pseudomonas aeruginosa (strain ATCC 15692 / DSM 22644 / CIP 104116 / JCM 14847 / LMG 12228 / 1C / PRS 101 / PAO1) protein is Alginate biosynthesis protein AlgX (algX).